Here is a 512-residue protein sequence, read N- to C-terminus: Phosphoenolpyruvate carboxylase (512 aa).

It belongs to the PEPCase type 2 family. Homotetramer. The cofactor is Mg(2+).

It catalyses the reaction oxaloacetate + phosphate = phosphoenolpyruvate + hydrogencarbonate. Its function is as follows. Catalyzes the irreversible beta-carboxylation of phosphoenolpyruvate (PEP) to form oxaloacetate (OAA), a four-carbon dicarboxylic acid source for the tricarboxylic acid cycle. This Caldivirga maquilingensis (strain ATCC 700844 / DSM 13496 / JCM 10307 / IC-167) protein is Phosphoenolpyruvate carboxylase.